Reading from the N-terminus, the 318-residue chain is Thymidylate synthase (318 aa).

DUMP is bound by residues arginine 25 and 180-181; that span reads RR. The Nucleophile role is filled by cysteine 200. Residues 220–223, asparagine 231, and 261–263 contribute to the dUMP site; these read RSGD and HIY. Aspartate 223 is a (6R)-5,10-methylene-5,6,7,8-tetrahydrofolate binding site. Position 317 (alanine 317) interacts with (6R)-5,10-methylene-5,6,7,8-tetrahydrofolate.

The protein belongs to the thymidylate synthase family. Bacterial-type ThyA subfamily. Homodimer.

The protein resides in the cytoplasm. The enzyme catalyses dUMP + (6R)-5,10-methylene-5,6,7,8-tetrahydrofolate = 7,8-dihydrofolate + dTMP. It participates in pyrimidine metabolism; dTTP biosynthesis. Functionally, catalyzes the reductive methylation of 2'-deoxyuridine-5'-monophosphate (dUMP) to 2'-deoxythymidine-5'-monophosphate (dTMP) while utilizing 5,10-methylenetetrahydrofolate (mTHF) as the methyl donor and reductant in the reaction, yielding dihydrofolate (DHF) as a by-product. This enzymatic reaction provides an intracellular de novo source of dTMP, an essential precursor for DNA biosynthesis. The sequence is that of Thymidylate synthase from Bacillus cereus (strain ATCC 10987 / NRS 248).